A 260-amino-acid polypeptide reads, in one-letter code: 6-carboxyhexanoate--CoA ligase (260 aa).

The protein belongs to the BioW family. In terms of assembly, homodimer. Mg(2+) serves as cofactor.

It carries out the reaction heptanedioate + ATP + CoA = 6-carboxyhexanoyl-CoA + AMP + diphosphate. The protein operates within metabolic intermediate metabolism; pimeloyl-CoA biosynthesis; pimeloyl-CoA from pimelate: step 1/1. Functionally, catalyzes the transformation of pimelate into pimeloyl-CoA with concomitant hydrolysis of ATP to AMP. The polypeptide is 6-carboxyhexanoate--CoA ligase (Fibrobacter succinogenes (strain ATCC 19169 / S85)).